Consider the following 247-residue polypeptide: Lipoprotein-releasing system ATP-binding protein LolD 2 (247 aa).

Positions 19-247 constitute an ABC transporter domain; it reads LEARKLVKSY…QDGRLQACGG (229 aa). 56–63 contributes to the ATP binding site; that stretch reads GASGSGKT.

It belongs to the ABC transporter superfamily. Lipoprotein translocase (TC 3.A.1.125) family. The complex is composed of two ATP-binding proteins (LolD) and two transmembrane proteins (LolC and LolE).

The protein resides in the cell inner membrane. Part of the ABC transporter complex LolCDE involved in the translocation of mature outer membrane-directed lipoproteins, from the inner membrane to the periplasmic chaperone, LolA. Responsible for the formation of the LolA-lipoprotein complex in an ATP-dependent manner. This chain is Lipoprotein-releasing system ATP-binding protein LolD 2, found in Chlorobaculum tepidum (strain ATCC 49652 / DSM 12025 / NBRC 103806 / TLS) (Chlorobium tepidum).